Consider the following 377-residue polypeptide: Nitric oxide reductase FlRd-NAD(+) reductase (377 aa).

Belongs to the FAD-dependent oxidoreductase family. FAD is required as a cofactor.

It is found in the cytoplasm. It carries out the reaction 2 reduced [nitric oxide reductase rubredoxin domain] + NAD(+) + H(+) = 2 oxidized [nitric oxide reductase rubredoxin domain] + NADH. Its pathway is nitrogen metabolism; nitric oxide reduction. Functionally, one of at least two accessory proteins for anaerobic nitric oxide (NO) reductase. Reduces the rubredoxin moiety of NO reductase. The chain is Nitric oxide reductase FlRd-NAD(+) reductase from Salmonella schwarzengrund (strain CVM19633).